The sequence spans 332 residues: Holliday junction branch migration complex subunit RuvB (332 aa).

The large ATPase domain (RuvB-L) stretch occupies residues 1-181 (MSRILDNELM…FGITGHMEYY (181 aa)). Residues Leu20, Arg21, Gly62, Lys65, Thr66, Thr67, 128–130 (EDF), Arg171, Tyr181, and Arg218 each bind ATP. Residue Thr66 participates in Mg(2+) binding. The small ATPAse domain (RuvB-S) stretch occupies residues 182 to 252 (EAGDLTEIVE…ITDQALSMLD (71 aa)). The head domain (RuvB-H) stretch occupies residues 255-332 (QEGLDYVDQK…EHLGYEYMKE (78 aa)). Positions 291, 310, 312, and 315 each coordinate DNA.

The protein belongs to the RuvB family. As to quaternary structure, homohexamer. Forms an RuvA(8)-RuvB(12)-Holliday junction (HJ) complex. HJ DNA is sandwiched between 2 RuvA tetramers; dsDNA enters through RuvA and exits via RuvB. An RuvB hexamer assembles on each DNA strand where it exits the tetramer. Each RuvB hexamer is contacted by two RuvA subunits (via domain III) on 2 adjacent RuvB subunits; this complex drives branch migration. In the full resolvosome a probable DNA-RuvA(4)-RuvB(12)-RuvC(2) complex forms which resolves the HJ.

Its subcellular location is the cytoplasm. The enzyme catalyses ATP + H2O = ADP + phosphate + H(+). Its function is as follows. The RuvA-RuvB-RuvC complex processes Holliday junction (HJ) DNA during genetic recombination and DNA repair, while the RuvA-RuvB complex plays an important role in the rescue of blocked DNA replication forks via replication fork reversal (RFR). RuvA specifically binds to HJ cruciform DNA, conferring on it an open structure. The RuvB hexamer acts as an ATP-dependent pump, pulling dsDNA into and through the RuvAB complex. RuvB forms 2 homohexamers on either side of HJ DNA bound by 1 or 2 RuvA tetramers; 4 subunits per hexamer contact DNA at a time. Coordinated motions by a converter formed by DNA-disengaged RuvB subunits stimulates ATP hydrolysis and nucleotide exchange. Immobilization of the converter enables RuvB to convert the ATP-contained energy into a lever motion, pulling 2 nucleotides of DNA out of the RuvA tetramer per ATP hydrolyzed, thus driving DNA branch migration. The RuvB motors rotate together with the DNA substrate, which together with the progressing nucleotide cycle form the mechanistic basis for DNA recombination by continuous HJ branch migration. Branch migration allows RuvC to scan DNA until it finds its consensus sequence, where it cleaves and resolves cruciform DNA. The sequence is that of Holliday junction branch migration complex subunit RuvB from Streptococcus sanguinis (strain SK36).